A 314-amino-acid polypeptide reads, in one-letter code: Calcium homeostasis modulator protein 4 (314 aa).

The Cytoplasmic segment spans residues 1 to 14 (MCPTLNNIVSSLQR). A helical membrane pass occupies residues 15–37 (NGIFINSLIAALTIGGQQLFSSS). The Extracellular segment spans residues 38-48 (TFSCPCQVGKN). 2 cysteine pairs are disulfide-bonded: Cys-41–Cys-131 and Cys-43–Cys-162. A helical transmembrane segment spans residues 49–71 (FYYGSAFLVIPALILLVAGFALR). The Cytoplasmic segment spans residues 72–103 (SQMWTITGEYCCSCAPPYRRISPLECKLACLR). A helical membrane pass occupies residues 104–129 (FFSITGRAVIAPLTWLAVTLLTGTYY). The Extracellular portion of the chain corresponds to 130–183 (ECAASEFASVDHYPMFDNVSASKREEILAGFPCCRSAPSDVILVRDEIALLHRY). Residues 184–207 (QSQMLGWILITLATIAALVSCCVA) traverse the membrane as a helical segment. Residues 208–314 (KCCSPLTSLQ…DRSRGIELKP (107 aa)) lie on the Cytoplasmic side of the membrane.

The protein belongs to the CALHM family. As to quaternary structure, oligomerizes to form decameric and undecameric channels. Two hemichannels can assemble in a tail-to-tail manner to form a gap junction. Placenta.

It localises to the cell membrane. In terms of biological role, may assemble to form gap junction channel-like structures involved in intercellular communication. Channel gating and ion conductance are likely regulated by membrane lipids rather than by membrane depolarization or extracellular calcium levels. This Homo sapiens (Human) protein is Calcium homeostasis modulator protein 4.